The sequence spans 250 residues: 5'-nucleotidase SurE (250 aa).

Asp-9, Asp-10, Ser-40, and Asn-92 together coordinate a divalent metal cation.

Belongs to the SurE nucleotidase family. A divalent metal cation serves as cofactor.

The protein resides in the cytoplasm. The enzyme catalyses a ribonucleoside 5'-phosphate + H2O = a ribonucleoside + phosphate. Its function is as follows. Nucleotidase that shows phosphatase activity on nucleoside 5'-monophosphates. This is 5'-nucleotidase SurE from Idiomarina loihiensis (strain ATCC BAA-735 / DSM 15497 / L2-TR).